A 220-amino-acid polypeptide reads, in one-letter code: MTNLFDPRSLGGQAPAGPQSRYILPSFIEHSSYGVKESNPYNKLFEERIIFLGVQVDDASANDVMAQLLVLESLDPDRDITMYINSPGGSFTSLMAIYDTMQYVRADITTVCLGQAASAAAVLLAAGSPGKRLALPNARVLIHQPATGGIQGQVSDLEIQAAEIERMRRLMETTLAKHTGKDAAVIRKDTDRDKILTAAEAKEYGIIDDVLEYRKLSAQK.

The Nucleophile role is filled by S118. The active site involves H143.

Belongs to the peptidase S14 family. Fourteen ClpP subunits assemble into 2 heptameric rings which stack back to back to give a disk-like structure with a central cavity, resembling the structure of eukaryotic proteasomes.

The protein resides in the cytoplasm. The enzyme catalyses Hydrolysis of proteins to small peptides in the presence of ATP and magnesium. alpha-casein is the usual test substrate. In the absence of ATP, only oligopeptides shorter than five residues are hydrolyzed (such as succinyl-Leu-Tyr-|-NHMec, and Leu-Tyr-Leu-|-Tyr-Trp, in which cleavage of the -Tyr-|-Leu- and -Tyr-|-Trp bonds also occurs).. Cleaves peptides in various proteins in a process that requires ATP hydrolysis. Has a chymotrypsin-like activity. Plays a major role in the degradation of misfolded proteins. This is ATP-dependent Clp protease proteolytic subunit 1 from Rhodococcus jostii (strain RHA1).